Reading from the N-terminus, the 202-residue chain is N-(5'-phosphoribosyl)anthranilate isomerase (202 aa).

It belongs to the TrpF family.

The catalysed reaction is N-(5-phospho-beta-D-ribosyl)anthranilate = 1-(2-carboxyphenylamino)-1-deoxy-D-ribulose 5-phosphate. The protein operates within amino-acid biosynthesis; L-tryptophan biosynthesis; L-tryptophan from chorismate: step 3/5. In Listeria monocytogenes serotype 4b (strain F2365), this protein is N-(5'-phosphoribosyl)anthranilate isomerase.